The chain runs to 82 residues: Defensin-like protein 208 (82 aa).

The first 29 residues, 1–29 (MAKNLNTVSFTVLLLVLLMASTGILETEA), serve as a signal peptide directing secretion. Cystine bridges form between cysteine 38-cysteine 63, cysteine 50-cysteine 76, and cysteine 54-cysteine 78.

This sequence belongs to the DEFL family.

Its subcellular location is the secreted. This chain is Defensin-like protein 208, found in Arabidopsis thaliana (Mouse-ear cress).